Consider the following 560-residue polypeptide: Diphtheria toxin homolog CRM228 (560 aa).

The first 25 residues, 1 to 25, serve as a signal peptide directing secretion; it reads MSRKLFASILIGALLGIGAPPSAHA. NAD(+) is bound by residues H46 and Y90. Residue E173 is part of the active site. Intrachain disulfides connect C211–C226 and C486–C496.

In Corynebacterium diphtheriae, this protein is Diphtheria toxin homolog CRM228.